The chain runs to 61 residues: Alpha-conotoxine-like Am1.3 (61 aa).

An N-terminal signal peptide occupies residues 1 to 21 (MGMRMMFTVFLLVVLATTVVS). The propeptide occupies 22–44 (FMSGRASHGRNAAASDLIALTIK). Cysteine amide is present on cysteine 60.

It belongs to the conotoxin A superfamily. In terms of processing, is not hydroxylated. Contains 2 disulfide bonds. In terms of tissue distribution, expressed by the venom duct.

It localises to the secreted. Its function is as follows. Alpha-conotoxins act on postsynaptic membranes, they bind to the nicotinic acetylcholine receptors (nAChR) and thus inhibit them. The chain is Alpha-conotoxine-like Am1.3 from Conus amadis (Amadis cone).